Consider the following 370-residue polypeptide: MHRLILVSILVCANFCCYRDTFATPQSASIKALRNANLRRDESNHLTDLYRRDENIRVTGTGHVQSPRFPNSYPRNLLLTWRLHSQEKTRIQLAFDHQFGLEEAENDICRYDFVEVEDVSESSTVVRGRWCGHKEIPPRITSRTNQIKITFQSDDYFVAKPGFKIYYSFVEDFQPEAASEINWESVTSSFSGVSYHSPSVMDSTLTADALDKAIAEFDTVEDLLKYFNPASWQDDLENLYMDTPRYRGRSYHERKSKVDLDRLNDDVKRYSCTPRNHSVNLREELKLTNAVFFPRCLLVQRCGGNCGCGTLNWKSCTCSSGKTVKKYHEVLKFEPGHFKRRGKAKNMALVDIQLDHHERCDCICSSRPPR.

The signal sequence occupies residues 1–23 (MHRLILVSILVCANFCCYRDTFA). The region spanning 52 to 170 (RDENIRVTGT…PGFKIYYSFV (119 aa)) is the CUB domain. The cysteines at positions 109 and 131 are disulfide-linked. Asn-276 is a glycosylation site (N-linked (GlcNAc...) asparagine). 2 disulfides stabilise this stretch: Cys-302–Cys-360 and Cys-306–Cys-362.

The protein belongs to the PDGF/VEGF growth factor family. As to quaternary structure, homodimer; disulfide-linked. Interacts with PDGFRB homodimers, and with heterodimers formed by PDGFRA and PDGFRB. Activated by proteolytic cleavage. Proteolytic removal of the N-terminal CUB domain releasing the core domain is necessary for unmasking the receptor-binding epitopes of the core domain. Cleavage after Arg-247 or Arg-249 by urokinase plasminogen activator gives rise to the active form. Widely expressed. Expressed at high levels in the kidney, adrenal glands, eye and CNS. In the kidney the localization is confined to arterial and arteriolar vascular smooth muscle cells and is also detected at low levels in the glomeruli In the eye in the anterior segment it is localized to the iris and ciliary body. In the retina localizes intensely to the outer plexiform layer, which contains photoreceptor axons and the synaptic layer between photoreceptors and second order neurons. In the spinal cord, prominently expressed in the motorneurons.

It localises to the secreted. Functionally, growth factor that plays an essential role in the regulation of embryonic development, cell proliferation, cell migration, survival and chemotaxis. Potent mitogen for cells of mesenchymal origin. Plays an important role in wound healing. Induces macrophage recruitment, increased interstitial pressure, and blood vessel maturation during angiogenesis. May play an important role in control of lens epithelial cell proliferation. Can initiate events that lead to a mesangial proliferative glomerulonephritis, including influx of monocytes and macrophages and production of extracellular matrix. This chain is Platelet-derived growth factor D (Pdgfd), found in Rattus norvegicus (Rat).